The following is a 165-amino-acid chain: REP-associated tyrosine transposase (165 aa).

This sequence belongs to the transposase 17 family. RAYT subfamily. Monomer.

Cleavage occurs in the presence of magnesium, but is much more pronounced with manganese. Functionally, transposase that is always flanked by repeated extragenic palindrome (REP) sequences, which are clustered in structures called bacterial interspersed mosaic elements (BIMEs). RayT catalyzes cleavage and recombination of BIMEs. Binds REP sequences and cleaves BIMEs both upstream and downstream of the REP sequence. Could be important in the creation of BIME variability and amplification. The polypeptide is REP-associated tyrosine transposase (Escherichia coli (strain K12)).